Reading from the N-terminus, the 328-residue chain is m7GpppN-mRNA hydrolase NUDT17 (328 aa).

Residues 90-236 (GVDLGVAVIL…DGTETPGLLP (147 aa)) enclose the Nudix hydrolase domain. A Nudix box motif is present at residues 127–148 (GHVELEEELLDGGLRELWEESG). The Mg(2+) site is built by Glu-142 and Glu-146. The tract at residues 299-328 (PCKSAAYLDPGPAKEEWNMDPLPPNQGSGK) is disordered.

The protein belongs to the Nudix hydrolase family. The cofactor is Mg(2+). Requires Mn(2+) as cofactor.

The catalysed reaction is a 5'-end (N(7)-methyl 5'-triphosphoguanosine)-ribonucleoside in mRNA + H2O = N(7)-methyl-GDP + a 5'-end phospho-ribonucleoside in mRNA + 2 H(+). In terms of biological role, acts as a decapping enzyme capable of hydrolyzing monomethylated capped RNAs (in vitro). Hydrolyzes monomethylated capped RNA after alpha and beta phosphates to form N(7)-methyl-GDP. Shows low activity towards unmethylated capped RNA. This Homo sapiens (Human) protein is m7GpppN-mRNA hydrolase NUDT17 (NUDT17).